A 30-amino-acid chain; its full sequence is Bowman-Birk type proteinase inhibitor 3 (30 aa).

Cystine bridges form between C9–C24 and C14–C22.

In terms of biological role, inhibits trypsin (IC(50)=4.90 nM) and, to a lesser extent, alpha-chymotrypsin (IC(50)=1.87 uM). This is Bowman-Birk type proteinase inhibitor 3 from Lathyrus sativus (White vetchling).